A 510-amino-acid chain; its full sequence is GMP synthase [glutamine-hydrolyzing] (510 aa).

One can recognise a Glutamine amidotransferase type-1 domain in the interval 5–195; the sequence is LVLVIDFGGQ…LFKICGLKED (191 aa). The active-site Nucleophile is the Cys82. Residues His169 and Glu171 contribute to the active site. The region spanning 196–385 is the GMPS ATP-PPase domain; sequence WSMSSFAKEK…LGIPHKLVWR (190 aa). 223–229 provides a ligand contact to ATP; that stretch reads SGGVDSS.

In terms of assembly, homodimer.

The enzyme catalyses XMP + L-glutamine + ATP + H2O = GMP + L-glutamate + AMP + diphosphate + 2 H(+). It participates in purine metabolism; GMP biosynthesis; GMP from XMP (L-Gln route): step 1/1. In terms of biological role, catalyzes the synthesis of GMP from XMP. The chain is GMP synthase [glutamine-hydrolyzing] from Clostridium acetobutylicum (strain ATCC 824 / DSM 792 / JCM 1419 / IAM 19013 / LMG 5710 / NBRC 13948 / NRRL B-527 / VKM B-1787 / 2291 / W).